Here is a 234-residue protein sequence, read N- to C-terminus: Purine nucleoside phosphorylase DeoD-type (234 aa).

His-4 serves as a coordination point for a purine D-ribonucleoside. Phosphate is bound by residues Gly-20, Arg-24, Arg-43, and 87–90; that span reads RVGT. Residues 179-181 and 203-204 each bind a purine D-ribonucleoside; these read EME and SN.

Belongs to the PNP/UDP phosphorylase family. As to quaternary structure, homohexamer; trimer of homodimers.

It carries out the reaction a purine D-ribonucleoside + phosphate = a purine nucleobase + alpha-D-ribose 1-phosphate. The enzyme catalyses a purine 2'-deoxy-D-ribonucleoside + phosphate = a purine nucleobase + 2-deoxy-alpha-D-ribose 1-phosphate. Catalyzes the reversible phosphorolytic breakdown of the N-glycosidic bond in the beta-(deoxy)ribonucleoside molecules, with the formation of the corresponding free purine bases and pentose-1-phosphate. In Latilactobacillus sakei subsp. sakei (strain 23K) (Lactobacillus sakei subsp. sakei), this protein is Purine nucleoside phosphorylase DeoD-type.